Reading from the N-terminus, the 182-residue chain is Dynactin subunit 5 (182 aa).

Methionine 1 carries the post-translational modification N-acetylmethionine.

It belongs to the dynactin subunits 5/6 family. Dynactin subunit 5 subfamily. As to quaternary structure, subunit of dynactin, a multiprotein complex part of a tripartite complex with dynein and a adapter, such as BICDL1, BICD2 or HOOK3. The dynactin complex is built around ACTR1A/ACTB filament and consists of an actin-related filament composed of a shoulder domain, a pointed end and a barbed end. Its length is defined by its flexible shoulder domain. The soulder is composed of 2 DCTN1 subunits, 4 DCTN2 and 2 DCTN3. The 4 DCNT2 (via N-terminus) bind the ACTR1A filament and act as molecular rulers to determine the length. The pointed end is important for binding dynein-dynactin cargo adapters. Consists of 4 subunits: ACTR10, DCNT4, DCTN5 and DCTN6. Within the complex DCTN6 forms a heterodimer with DCTN5. The barbed end is composed of a CAPZA1:CAPZB heterodimers, which binds ACTR1A/ACTB filament and dynactin and stabilizes dynactin. Interacts with N4BP2L1.

It localises to the cytoplasm. The protein resides in the cytoskeleton. The protein localises to the chromosome. Its subcellular location is the centromere. It is found in the kinetochore. Functionally, part of the dynactin complex that activates the molecular motor dynein for ultra-processive transport along microtubules. The polypeptide is Dynactin subunit 5 (Homo sapiens (Human)).